We begin with the raw amino-acid sequence, 448 residues long: Ribulose bisphosphate carboxylase large chain (448 aa).

A propeptide spanning residues Met1 to Ser2 is cleaved from the precursor. Pro3 carries the post-translational modification N-acetylproline. Residue Lys14 is modified to N6,N6,N6-trimethyllysine. The substrate site is built by Asn122 and Thr172. Lys174 serves as the catalytic Proton acceptor. A substrate-binding site is contributed by Lys176. Residues Lys200, Asp202, and Glu203 each coordinate Mg(2+). Lys200 carries the N6-carboxylysine modification. The Proton acceptor role is filled by His293. Substrate contacts are provided by Arg294, His326, and Ser378.

Belongs to the RuBisCO large chain family. Type I subfamily. As to quaternary structure, heterohexadecamer of 8 large chains and 8 small chains; disulfide-linked. The disulfide link is formed within the large subunit homodimers. It depends on Mg(2+) as a cofactor. The disulfide bond which can form in the large chain dimeric partners within the hexadecamer appears to be associated with oxidative stress and protein turnover.

The protein localises to the plastid. The protein resides in the chloroplast. The enzyme catalyses 2 (2R)-3-phosphoglycerate + 2 H(+) = D-ribulose 1,5-bisphosphate + CO2 + H2O. It catalyses the reaction D-ribulose 1,5-bisphosphate + O2 = 2-phosphoglycolate + (2R)-3-phosphoglycerate + 2 H(+). RuBisCO catalyzes two reactions: the carboxylation of D-ribulose 1,5-bisphosphate, the primary event in carbon dioxide fixation, as well as the oxidative fragmentation of the pentose substrate in the photorespiration process. Both reactions occur simultaneously and in competition at the same active site. The protein is Ribulose bisphosphate carboxylase large chain of Dichapetalum crassifolium.